Here is a 328-residue protein sequence, read N- to C-terminus: DNA-directed RNA polymerase subunit alpha 1 (328 aa).

The interval 1 to 234 (MQGFVKDFLK…GQLDEFVDER (234 aa)) is alpha N-terminal domain (alpha-NTD). An alpha C-terminal domain (alpha-CTD) region spans residues 248 to 328 (FDPILLRPVN…NWPPASLIED (81 aa)).

It belongs to the RNA polymerase alpha chain family. In terms of assembly, homodimer. The RNAP catalytic core consists of 2 alpha, 1 beta, 1 beta' and 1 omega subunit. When a sigma factor is associated with the core the holoenzyme is formed, which can initiate transcription.

It carries out the reaction RNA(n) + a ribonucleoside 5'-triphosphate = RNA(n+1) + diphosphate. Its function is as follows. DNA-dependent RNA polymerase catalyzes the transcription of DNA into RNA using the four ribonucleoside triphosphates as substrates. This Psychromonas ingrahamii (strain DSM 17664 / CCUG 51855 / 37) protein is DNA-directed RNA polymerase subunit alpha 1.